The primary structure comprises 301 residues: Probable actin-related protein 2/3 complex subunit 2 (301 aa).

The protein belongs to the ARPC2 family. As to quaternary structure, component of the Arp2/3 complex, at least composed of arx-1, arx-2, arx-4 and arx-6.

It is found in the cytoplasm. Its subcellular location is the cytoskeleton. In terms of biological role, functions as actin-binding component of the Arp2/3 complex which is involved in regulation of actin polymerization and together with an activating nucleation-promoting factor (NPF) mediates the formation of branched actin networks. Seems to contact the mother actin filament. Plays a role in time-dependent memory loss and the retention of conditioned behavior over time. In Caenorhabditis elegans, this protein is Probable actin-related protein 2/3 complex subunit 2.